Here is a 736-residue protein sequence, read N- to C-terminus: MGARVKVVSEIEKIMRNIDQIRNIGIIAHVDHGKTTTSDSLLAAAGIISERIAGEALVLDYLNVEKQRGITVKSANVSLYHEYEGKPYVINLIDTPGHVDFSGKVTRSLRVLDGAIVVVDAVEGVMTQTETVIRQALEERVRPILFINKVDRLIKELKLPPEKIQQRFVEIIKEVNNLIDLYAEPEFRKKWKLDPNAGMVAFGSAKDKWGISVPQVKKKGITFREIIQAYEKGKEAVAELSKKMPLHETLLDMVIKFVPNPREAQRYRIPKIWKGDINSEIGQAMLNADPDGPLVFFINDVRIEKAGLVATGRVFSGTLRSGEEVYLLNAGKKSRLLQVSIYMGPFREVTKEIPAGNIGAVMGFEDVRAGETVVSLGYEENAAPFESLRYVSEPVVTIAVEPVKIQDLPKMIEALRKLTIEDPNLVVKINEETGEYLLSGMGPLHLEIALTMLREKFGVEVKASPPIVVYRETVRQQSRVFEGKSPNKHNKLYISVEPLNEETITLIQNGAVTEDQDPKDRARILADKAGWDYNEARKIWAIDENINVFVDKTAGVQYLREVKDTIIAGFRLALKEGPLAAEPVRGVKVVLHDAVIHEDPVHRGPGQLYPAVRNAIWAGILDGRPTLLEPLQKLDIRAPMEYLSNITAVLTRKRGRIINVETTGVMARIIAAIPVAESFDLAGELRSATAGRAFWGVEFYGWAPVPDQMLQDLIAKIRQRKGLPPSPPKIDDLIGP.

Residues 19–262 form the tr-type G domain; sequence DQIRNIGIIA…MVIKFVPNPR (244 aa). Residues 28–35, 94–98, and 148–151 each bind GTP; these read AHVDHGKT, DTPGH, and NKVD. Histidine 602 is subject to Diphthamide.

The protein belongs to the TRAFAC class translation factor GTPase superfamily. Classic translation factor GTPase family. EF-G/EF-2 subfamily.

It is found in the cytoplasm. Catalyzes the GTP-dependent ribosomal translocation step during translation elongation. During this step, the ribosome changes from the pre-translocational (PRE) to the post-translocational (POST) state as the newly formed A-site-bound peptidyl-tRNA and P-site-bound deacylated tRNA move to the P and E sites, respectively. Catalyzes the coordinated movement of the two tRNA molecules, the mRNA and conformational changes in the ribosome. This is Elongation factor 2 (fusA) from Aeropyrum pernix (strain ATCC 700893 / DSM 11879 / JCM 9820 / NBRC 100138 / K1).